Consider the following 28-residue polypeptide: Cruzioseptin-3 (28 aa).

Gln-25 is modified (glutamine amide). Residues 27–28 (EQ) constitute a propeptide that is removed on maturation.

As to expression, expressed by the skin glands.

It is found in the secreted. Functionally, has antimicrobial activity against Gram-negative bacterium E.coli (MIC=13.32 uM), against Gram-positive bacterium S.aureus (MIC=13.32 uM) and against fungus C.albicans (MIC=13.32 uM). At higher concentrations also has a bactericidal and fungicidal effect. Has hemagglutinating activity against horse erythrocytes. The sequence is that of Cruzioseptin-3 from Cruziohyla calcarifer (Splendid leaf frog).